The chain runs to 368 residues: Ceramide synthase hyl-1 (368 aa).

7 helical membrane-spanning segments follow: residues 27-47 (FVDL…RILW), 92-112 (ILEC…GLYV), 138-158 (IWWY…GSTF), 165-185 (FWQL…SWTI), 191-211 (GTLI…GKLV), 225-245 (FVLF…FIVI), and 275-295 (LIVF…FIIL). Residues 90–303 (KKILECFWRF…ILRIAYRTST (214 aa)) enclose the TLC domain. The tract at residues 306–368 (QAKDVRSDSD…ARHRRAPRKE (63 aa)) is disordered. A compositionally biased stretch (acidic residues) spans 343–353 (TDDDDDEGEEE). A compositionally biased stretch (basic residues) spans 357–368 (RKARHRRAPRKE).

The protein belongs to the sphingosine N-acyltransferase family.

Its subcellular location is the membrane. It carries out the reaction a very long-chain fatty acyl-CoA + a sphingoid base = an N-(very-long-chain fatty acyl)-sphingoid base + CoA + H(+). The enzyme catalyses 15-methylhexadecasphinganine + a fatty acyl-CoA = an N-acyl-15-methylhexadecasphinganine + CoA + H(+). It catalyses the reaction a fatty acyl-CoA + sphinganine = an N-acylsphinganine + CoA + H(+). The catalysed reaction is sphinganine + tetradecanoyl-CoA = N-(tetradecanoyl)-sphinganine + CoA + H(+). It carries out the reaction hexacosanoyl-CoA + sphinganine = N-hexacosanoylsphinganine + CoA + H(+). The protein operates within lipid metabolism; sphingolipid metabolism. Functionally, catalyzes the acylation of sphingoid bases to form ceramides, which are key players in cell signaling events such as extending lifespan and enhancing stress resistance. C.elegans contain specific sphingoid bases, which are unique or different in structure compared to the sphingoid bases found in other animals. Two examples of these distinctive compounds are: 15-methylhexadecasphinganine and 15-methylhexadecasphing-4-enine. Exhibits substrate preference for fatty acyl-coA chains containing carbon chain length (C16-C18) and very long chains (24 carbons and more). The polypeptide is Ceramide synthase hyl-1 (hyl-1) (Caenorhabditis elegans).